We begin with the raw amino-acid sequence, 157 residues long: Large ribosomal subunit protein uL15 (157 aa).

The tract at residues 1-40 (MKLHELSDNPGATKKRMRIGRGPGSGKGKMGGRGIKGQKS) is disordered. Over residues 21 to 35 (RGPGSGKGKMGGRGI) the composition is skewed to gly residues.

Belongs to the universal ribosomal protein uL15 family. In terms of assembly, part of the 50S ribosomal subunit.

In terms of biological role, binds to the 23S rRNA. This Ruegeria pomeroyi (strain ATCC 700808 / DSM 15171 / DSS-3) (Silicibacter pomeroyi) protein is Large ribosomal subunit protein uL15.